The chain runs to 354 residues: Guanine nucleotide-binding protein G(t) subunit alpha-3 (354 aa).

The disordered stretch occupies residues 1–27 (MGSGISSESKESAKRSKELEKKLQEDA). Gly-2 carries N-myristoyl glycine lipidation. Residues 8–27 (ESKESAKRSKELEKKLQEDA) show a composition bias toward basic and acidic residues. In terms of domain architecture, G-alpha spans 32–354 (RTVKLLLLGA…KENLKDCGLF (323 aa)). Residues 35–48 (KLLLLGAGESGKST) form a G1 motif region. GTP is bound by residues 40-47 (GAGESGKS), 175-181 (LHSRVKT), 200-204 (DVGGQ), 269-272 (NKKD), and Ala-326. 2 residues coordinate Mg(2+): Ser-47 and Thr-181. A G2 motif region spans residues 173 to 181 (DVLHSRVKT). A G3 motif region spans residues 196–205 (FRMFDVGGQR). A G4 motif region spans residues 265–272 (VLFLNKKD). The G5 motif stretch occupies residues 324 to 329 (TCATDT).

The protein belongs to the G-alpha family. G(i/o/t/z) subfamily. G proteins are composed of 3 units; alpha, beta and gamma, respectively GNAT3, GNB1 and GNG13 for Gustducin heterotrimer for bitter taste transduction. The alpha chain contains the guanine nucleotide binding site. Component of the TAS2R14-GNAT3 complex, consisting of TAS2R14, GNAT3, GNB1 and GNG2; within the complex interacts with TAS2R14; this complex plays a role in the perception of bitterness. Gustducin heterotrimer may also be composed of GNAT3, GNB3 and GNG13. Post-translationally, potential N-myristoylation may anchor alpha-subunit to the inner surface of plasma membrane. As to expression, expressed in taste buds (sensory organs of clustered epithelial cells) of the circumvallate, foliate and fungiform papillae of the tongue, as well as in nasoincisor, palatal and epiglottal taste buds at protein level. Expressed in enteroendocrine of the gut, in the lumenal pole of a subset of brush cells lining the stomach and the intestine at protein level. Detected in solitary cells throughout the respiratory track. Expressed also in spermatozoa.

It is found in the cytoplasm. Its function is as follows. Guanine nucleotide-binding protein (G protein) alpha subunit playing a prominent role in bitter and sweet taste transduction as well as in umami (monosodium glutamate, monopotassium glutamate, and inosine monophosphate) taste transduction. Transduction by this alpha subunit involves coupling of specific cell-surface receptors with a cGMP-phosphodiesterase; Activation of phosphodiesterase lowers intracellular levels of cAMP and cGMP which may open a cyclic nucleotide-suppressible cation channel leading to influx of calcium, ultimately leading to release of neurotransmitter. Indeed, denatonium and strychnine induce transient reduction in cAMP and cGMP in taste tissue, whereas this decrease is inhibited by GNAT3 antibody. Gustducin heterotrimer transduces response to bitter and sweet compounds via regulation of phosphodiesterase for alpha subunit, as well as via activation of phospholipase C for beta and gamma subunits, with ultimate increase inositol trisphosphate and increase of intracellular Calcium. GNAT3 can functionally couple to taste receptors to transmit intracellular signal: receptor heterodimer TAS1R2/TAS1R3 senses sweetness and TAS1R1/TAS1R3 transduces umami taste, whereas the T2R family GPCRs act as bitter sensors. Also functions as lumenal sugar sensors in the gut to control the expression of the Na+-glucose transporter SGLT1 in response to dietaty sugar, as well as the secretion of Glucagon-like peptide-1, GLP-1 and glucose-dependent insulinotropic polypeptide, GIP. Thus, may modulate the gut capacity to absorb sugars, with implications for the prevention and treatment of malabsorption syndromes and diet-related disorders including diabetes and obesity. The polypeptide is Guanine nucleotide-binding protein G(t) subunit alpha-3 (Gnat3) (Rattus norvegicus (Rat)).